A 138-amino-acid polypeptide reads, in one-letter code: MIYWLFLAMAIITEVIGTLSMKHASVSGGVVGMAVMYIMIATSYILLAMAVKKVALGVAYALWEGVGILFITVFSVMWFDESLSLMKVGGLALLITGIMLIKSGTRKAAVKKSAEVVKQMANKAVSVATTKSSKIKEA.

The next 4 membrane-spanning stretches (helical) occupy residues 1–21 (MIYWLFLAMAIITEVIGTLSM), 30–50 (VVGMAVMYIMIATSYILLAMA), 54–74 (VALGVAYALWEGVGILFITVF), and 81–101 (ESLSLMKVGGLALLITGIMLI).

Belongs to the drug/metabolite transporter (DMT) superfamily. Small multidrug resistance (SMR) (TC 2.A.7.1) family. MdtJ subfamily. As to quaternary structure, forms a complex with MdtI.

It localises to the cell inner membrane. Its function is as follows. Catalyzes the excretion of spermidine. This chain is Spermidine export protein MdtJ, found in Photorhabdus laumondii subsp. laumondii (strain DSM 15139 / CIP 105565 / TT01) (Photorhabdus luminescens subsp. laumondii).